We begin with the raw amino-acid sequence, 715 residues long: Polyribonucleotide nucleotidyltransferase (715 aa).

The Mg(2+) site is built by Asp490 and Asp496. Residues 557-616 (PRIETMTIPTDKIREVIGSGGKVIREIVETSGAKVDISDDGTIKIASANADSIKKAYDMI) form the KH domain. Residues 626-694 (GKIYVGKVVK…DRGKVRLGMK (69 aa)) enclose the S1 motif domain.

It belongs to the polyribonucleotide nucleotidyltransferase family. Mg(2+) serves as cofactor.

Its subcellular location is the cytoplasm. The catalysed reaction is RNA(n+1) + phosphate = RNA(n) + a ribonucleoside 5'-diphosphate. In terms of biological role, involved in mRNA degradation. Catalyzes the phosphorolysis of single-stranded polyribonucleotides processively in the 3'- to 5'-direction. This Paracoccus denitrificans (strain Pd 1222) protein is Polyribonucleotide nucleotidyltransferase.